A 134-amino-acid chain; its full sequence is Large ribosomal subunit protein eL32 (134 aa).

Belongs to the eukaryotic ribosomal protein eL32 family.

This Drosophila bifasciata (Fruit fly) protein is Large ribosomal subunit protein eL32 (RpL32).